A 511-amino-acid polypeptide reads, in one-letter code: Coatomer subunit delta (511 aa).

Over residues 167–177 the composition is skewed to basic and acidic residues; that stretch reads QQARRDAERQG. Positions 167–188 are disordered; sequence QQARRDAERQGKKAPGFGGFGS. S223 is modified (phosphoserine). 2 positions are modified to N6-acetyllysine: K233 and K241. S244 is modified (phosphoserine). The MHD domain maps to 271-511; sequence MESVHMKIEE…TFLVDKYEIL (241 aa). 2 positions are modified to N6-acetyllysine: K309 and K351. The residue at position 493 (S493) is a Phosphoserine.

Belongs to the adaptor complexes medium subunit family. Delta-COP subfamily. In terms of assembly, oligomeric complex that consists of at least the alpha, beta, beta', gamma, delta, epsilon and zeta subunits.

The protein localises to the cytoplasm. The protein resides in the golgi apparatus membrane. It localises to the cytoplasmic vesicle. Its subcellular location is the COPI-coated vesicle membrane. Its function is as follows. The coatomer is a cytosolic protein complex that binds to dilysine motifs and reversibly associates with Golgi non-clathrin-coated vesicles, which further mediate biosynthetic protein transport from the ER, via the Golgi up to the trans Golgi network. Coatomer complex is required for budding from Golgi membranes, and is essential for the retrograde Golgi-to-ER transport of dilysine-tagged proteins. In mammals, the coatomer can only be recruited by membranes associated to ADP-ribosylation factors (ARFs), which are small GTP-binding proteins; the complex also influences the Golgi structural integrity, as well as the processing, activity, and endocytic recycling of LDL receptors. The chain is Coatomer subunit delta (ARCN1) from Pongo abelii (Sumatran orangutan).